A 416-amino-acid chain; its full sequence is Serine hydroxymethyltransferase (416 aa).

Residues Leu121 and 125–127 each bind (6S)-5,6,7,8-tetrahydrofolate; that span reads GHL. N6-(pyridoxal phosphate)lysine is present on Lys229.

Belongs to the SHMT family. As to quaternary structure, homodimer. Requires pyridoxal 5'-phosphate as cofactor.

The protein resides in the cytoplasm. The catalysed reaction is (6R)-5,10-methylene-5,6,7,8-tetrahydrofolate + glycine + H2O = (6S)-5,6,7,8-tetrahydrofolate + L-serine. Its pathway is one-carbon metabolism; tetrahydrofolate interconversion. It functions in the pathway amino-acid biosynthesis; glycine biosynthesis; glycine from L-serine: step 1/1. Catalyzes the reversible interconversion of serine and glycine with tetrahydrofolate (THF) serving as the one-carbon carrier. This reaction serves as the major source of one-carbon groups required for the biosynthesis of purines, thymidylate, methionine, and other important biomolecules. Also exhibits THF-independent aldolase activity toward beta-hydroxyamino acids, producing glycine and aldehydes, via a retro-aldol mechanism. The sequence is that of Serine hydroxymethyltransferase from Neisseria gonorrhoeae (strain NCCP11945).